The sequence spans 216 residues: Probable chemoreceptor glutamine deamidase CheD (216 aa).

This sequence belongs to the CheD family.

The catalysed reaction is L-glutaminyl-[protein] + H2O = L-glutamyl-[protein] + NH4(+). In terms of biological role, probably deamidates glutamine residues to glutamate on methyl-accepting chemotaxis receptors (MCPs), playing an important role in chemotaxis. The sequence is that of Probable chemoreceptor glutamine deamidase CheD from Halorhodospira halophila (strain DSM 244 / SL1) (Ectothiorhodospira halophila (strain DSM 244 / SL1)).